The following is a 1612-amino-acid chain: MIAEPAHFYLFGLICLCSGSRLRQEDFPPRIVEHPSDLIVSKGEPATLNCKAEGRPTPTIEWYKGGERVETDKDDPRSHRMLLPSGSLFFLRIVHGRKSRPDEGVYICVARNYLGEAVSHNASLEVAILRDDFRQNPSDVMVAVGEPAVMECQPPRGHPEPTISWKKDGSPLDDKDERITIRGGKLMITYTRKSDAGKYVCVGTNMVGERESEVAELTVLERPSFVKRPSNLAVTVDDSAEFKCEARGDPVPTVRWRKDDGELPKSRYEIRDDHTLKIRKVTAGDMGSYTCVAENMVGKAEASATLTVQEPPHFVVKPRDQVVALGRTVTFQCEATGNPQPAIFWRREGSQNLLFSYQPPQSSSRFSVSQTGDLTITNVQRSDVGYYICQTLNVAGSIITKAYLEVTDVIADRPPPVIRQGPVNQTVAVDGTLILSCVATGSPAPTILWRKDGVLVSTQDSRIKQLESGVLQIRYAKLGDTGRYTCTASTPSGEATWSAYIEVQEFGVPVQPPRPTDPNLIPSAPSKPEVTDVSKNTVTLSWQPNLNSGATPTSYIIEAFSHASGSSWQTAAENVKTETFAIKGLKPNAIYLFLVRAANAYGISDPSQISDPVKTQDVPPTSQGVDHKQVQRELGNVVLHLHNPTILSSSSVEVHWTVDQQSQYIQGYKILYRPSGASHGESEWLVFEVRTPTKNSVVIPDLRKGVNYEIKARPFFNEFQGADSEIKFAKTLEEAPSAPPRSVTVSKNDGNGTAILVTWQPPPEDTQNGMVQEYKVWCLGNETKYHINKTVDGSTFSVVIPSLVPGIRYSVEVAASTGAGPGVKSEPQFIQLDSHGNPVSPEDQVSLAQQISDVVRQPAFIAGIGAACWIILMVFSIWLYRHRKKRNGLTSTYAGIRKVPSFTFTPTVTYQRGGEAVSSGGRPGLLNISEPATQPWLADTWPNTGNNHNDCSINCCTAGNGNSDSNLTTYSRPADCIANYNNQLDNKQTNLMLPESTVYGDVDLSNKINEMKTFNSPNLKDGRFVNPSGQPTPYATTQLIQANLSNNMNNGAGDSSEKHWKPPGQQKPEVAPIQYNIMEQNKLNKDYRANDTIPPTIPYNQSYDQNTGGSYNSSDRGSSTSGSQGHKKGARTPKAPKQGGMNWADLLPPPPAHPPPHSNSEEYNMSVDESYDQEMPCPVPPAPMYLQQDELQEEEDERGPTPPVRGAASSPAAVSYSHQSTATLTPSPQEELQPMLQDCPEDLGHMPHPPDRRRQPVSPPPPPRPISPPHTYGYISGPLVSDMDTDAPEEEEDEADMEVAKMQTRRLLLRGLEQTPASSVGDLESSVTGSMINGWGSASEEDNISSGRSSVSSSDGSFFTDADFAQAVAAAAEYAGLKVARRQMQDAAGRRHFHASQCPRPTSPVSTDSNMSAVVIQKARPAKKQKHQPGHLRREAYADDLPPPPVPPPAIKSPTVQSKAQLEVRPVMVPKLASIEARTDRSSDRKGGSYKGREALDGRQVTDLRTNPSDPREAQEQPNDGKGRGTRQPKRDLPPAKTHLGQEDILPYCRPTFPTSNNPRDPSSSSSMSSRGSGSRQREQANVGRRNMAEMQVLGGFERGDENNEELEETES.

Residues 1–19 (MIAEPAHFYLFGLICLCSG) form the signal peptide. Residues 20 to 858 (SRLRQEDFPP…QQISDVVRQP (839 aa)) lie on the Extracellular side of the membrane. Ig-like C2-type domains are found at residues 29 to 125 (PRIV…ASLE), 131 to 218 (DDFR…AELT), 223 to 307 (PSFV…ATLT), 312 to 407 (PHFV…LEVT), and 416 to 502 (PVIR…AYIE). An intrachain disulfide couples Cys-50 to Cys-108. Asn-121 is a glycosylation site (N-linked (GlcNAc...) asparagine). Disulfide bonds link Cys-152-Cys-201, Cys-244-Cys-291, and Cys-333-Cys-389. A glycan (N-linked (GlcNAc...) asparagine) is linked at Asn-424. A disulfide bridge connects residues Cys-437 and Cys-486. Fibronectin type-III domains lie at 524–618 (APSK…TQDV), 637–734 (VVLH…TLEE), and 739–835 (PPRS…LDSH). N-linked (GlcNAc...) asparagine glycosylation is found at Asn-751, Asn-781, and Asn-788. Residues 859-879 (AFIAGIGAACWIILMVFSIWL) form a helical membrane-spanning segment. Residues 880 to 1612 (YRHRKKRNGL…NNEELEETES (733 aa)) are Cytoplasmic-facing. Position 901 is a phosphoserine (Ser-901). Thr-909 bears the Phosphothreonine mark. At Tyr-999 the chain carries Phosphotyrosine. Position 1016 is a phosphoserine (Ser-1016). Tyr-1034 is modified (phosphotyrosine). Positions 1045 to 1068 (SNNMNNGAGDSSEKHWKPPGQQKP) are disordered. Tyr-1075 bears the Phosphotyrosine mark. Disordered stretches follow at residues 1088–1298 (RAND…ADME), 1313–1358 (EQTP…DGSF), and 1381–1612 (RRQM…ETES). The segment covering 1098-1107 (PYNQSYDQNT) has biased composition (polar residues). Residues 1108–1124 (GGSYNSSDRGSSTSGSQ) show a composition bias toward low complexity. The segment covering 1147 to 1157 (LPPPPAHPPPH) has biased composition (pro residues). Position 1201 is a phosphothreonine (Thr-1201). Residues 1216 to 1230 (YSHQSTATLTPSPQE) show a composition bias toward polar residues. The segment covering 1242–1254 (DLGHMPHPPDRRR) has biased composition (basic and acidic residues). Positions 1257-1268 (VSPPPPPRPISP) are enriched in pro residues. Ser-1258 is modified (phosphoserine). A compositionally biased stretch (acidic residues) spans 1283–1297 (MDTDAPEEEEDEADM). Residues 1345-1358 (SSGRSSVSSSDGSF) show a composition bias toward low complexity. The segment covering 1399–1412 (PRPTSPVSTDSNMS) has biased composition (polar residues). A compositionally biased stretch (basic residues) spans 1420-1431 (RPAKKQKHQPGH). Positions 1441–1451 (LPPPPVPPPAI) are enriched in pro residues. 2 stretches are compositionally biased toward basic and acidic residues: residues 1477–1502 (ARTD…RQVT) and 1510–1534 (DPRE…RDLP). A compositionally biased stretch (polar residues) spans 1553–1562 (FPTSNNPRDP). The span at 1563 to 1575 (SSSSSMSSRGSGS) shows a compositional bias: low complexity. The span at 1603–1612 (NNEELEETES) shows a compositional bias: acidic residues.

This sequence belongs to the immunoglobulin superfamily. ROBO family. As to quaternary structure, homodimer. Dimerization is mediated by the extracellular domain and is independent of SLIT liganding. Interacts with SLIT1 Interacts with SLIT2. Interacts with FLRT3. Interacts with MYO9B (via Rho-GAP domain). Post-translationally, ubiquitinated. May be deubiquitinated by USP33. As to expression, detected in embryonic thalamus neurons (at protein level). Expressed in embryonal spinal cord. Expressed in embryonal lung, and in adult lung bronchial epithelial cells of large proximal airways.

The protein resides in the cell membrane. Its subcellular location is the cell projection. It is found in the axon. It localises to the endoplasmic reticulum-Golgi intermediate compartment membrane. Its function is as follows. Receptor for SLIT1 and SLIT2 that mediates cellular responses to molecular guidance cues in cellular migration, including axonal navigation at the ventral midline of the neural tube and projection of axons to different regions during neuronal development. Interaction with the intracellular domain of FLRT3 mediates axon attraction towards cells expressing NTN1. In axon growth cones, the silencing of the attractive effect of NTN1 by SLIT2 may require the formation of a ROBO1-DCC complex. Plays a role in the regulation of cell migration via its interaction with MYO9B; inhibits MYO9B-mediated stimulation of RHOA GTPase activity, and thereby leads to increased levels of active, GTP-bound RHOA. May be required for lung development. This is Roundabout homolog 1 (Robo1) from Mus musculus (Mouse).